Reading from the N-terminus, the 143-residue chain is Large ribosomal subunit protein uL11 (143 aa).

Belongs to the universal ribosomal protein uL11 family. As to quaternary structure, part of the ribosomal stalk of the 50S ribosomal subunit. Interacts with L10 and the large rRNA to form the base of the stalk. L10 forms an elongated spine to which L12 dimers bind in a sequential fashion forming a multimeric L10(L12)X complex. One or more lysine residues are methylated.

Its function is as follows. Forms part of the ribosomal stalk which helps the ribosome interact with GTP-bound translation factors. The protein is Large ribosomal subunit protein uL11 of Marinobacter nauticus (strain ATCC 700491 / DSM 11845 / VT8) (Marinobacter aquaeolei).